Reading from the N-terminus, the 285-residue chain is Probable endonuclease 4 (285 aa).

Zn(2+)-binding residues include His-69, His-109, Glu-145, Asp-179, His-182, His-216, Asp-229, His-231, and Glu-261.

Belongs to the AP endonuclease 2 family. Zn(2+) is required as a cofactor.

It catalyses the reaction Endonucleolytic cleavage to 5'-phosphooligonucleotide end-products.. Endonuclease IV plays a role in DNA repair. It cleaves phosphodiester bonds at apurinic or apyrimidinic (AP) sites, generating a 3'-hydroxyl group and a 5'-terminal sugar phosphate. In Shigella boydii serotype 18 (strain CDC 3083-94 / BS512), this protein is Probable endonuclease 4.